The following is a 353-amino-acid chain: GTPase Obg (353 aa).

An Obg domain is found at 1–159 (MKFLDEAKVY…RWIWLRLKLI (159 aa)). The 168-residue stretch at 160–327 (ADAGLVGLPN…ALRALAAVIG (168 aa)) folds into the OBG-type G domain. GTP-binding positions include 166–173 (GLPNAGKS), 191–195 (FTTLH), 212–215 (DIPG), 279–282 (NKID), and 308–310 (SGI). Mg(2+) is bound by residues S173 and T193. The interval 332 to 353 (SDKAKGAADNAANAEPWAPQDA) is disordered.

Belongs to the TRAFAC class OBG-HflX-like GTPase superfamily. OBG GTPase family. In terms of assembly, monomer. Requires Mg(2+) as cofactor.

It is found in the cytoplasm. In terms of biological role, an essential GTPase which binds GTP, GDP and possibly (p)ppGpp with moderate affinity, with high nucleotide exchange rates and a fairly low GTP hydrolysis rate. Plays a role in control of the cell cycle, stress response, ribosome biogenesis and in those bacteria that undergo differentiation, in morphogenesis control. The chain is GTPase Obg from Rhodopseudomonas palustris (strain HaA2).